A 544-amino-acid polypeptide reads, in one-letter code: CTP synthase (544 aa).

An amidoligase domain region spans residues 1–266; it reads MATNYIFVTG…DDFVCDRFRL (266 aa). Serine 14 lines the CTP pocket. A UTP-binding site is contributed by serine 14. Residues 15 to 20 and aspartate 72 contribute to the ATP site; that span reads SLGKGI. The Mg(2+) site is built by aspartate 72 and glutamate 140. CTP-binding positions include 147-149, 187-192, and lysine 223; these read DIE and KTKPTQ. Residues 187–192 and lysine 223 contribute to the UTP site; that span reads KTKPTQ. Residue 239 to 241 participates in ATP binding; the sequence is KDV. The Glutamine amidotransferase type-1 domain maps to 291 to 542; that stretch reads TIGMVGKYVE…VKAAKEHQGK (252 aa). Position 352 (glycine 352) interacts with L-glutamine. The Nucleophile; for glutamine hydrolysis role is filled by cysteine 379. Residues 380 to 383, glutamate 403, and arginine 470 contribute to the L-glutamine site; that span reads LGMQ. Residues histidine 515 and glutamate 517 contribute to the active site.

The protein belongs to the CTP synthase family. In terms of assembly, homotetramer.

The catalysed reaction is UTP + L-glutamine + ATP + H2O = CTP + L-glutamate + ADP + phosphate + 2 H(+). It carries out the reaction L-glutamine + H2O = L-glutamate + NH4(+). The enzyme catalyses UTP + NH4(+) + ATP = CTP + ADP + phosphate + 2 H(+). Its pathway is pyrimidine metabolism; CTP biosynthesis via de novo pathway; CTP from UDP: step 2/2. Allosterically activated by GTP, when glutamine is the substrate; GTP has no effect on the reaction when ammonia is the substrate. The allosteric effector GTP functions by stabilizing the protein conformation that binds the tetrahedral intermediate(s) formed during glutamine hydrolysis. Inhibited by the product CTP, via allosteric rather than competitive inhibition. In terms of biological role, catalyzes the ATP-dependent amination of UTP to CTP with either L-glutamine or ammonia as the source of nitrogen. Regulates intracellular CTP levels through interactions with the four ribonucleotide triphosphates. The protein is CTP synthase of Glaesserella parasuis serovar 5 (strain SH0165) (Haemophilus parasuis).